The sequence spans 246 residues: tRNA (guanine-N(1)-)-methyltransferase (246 aa).

Gly114 provides a ligand contact to S-adenosyl-L-methionine.

The protein belongs to the RNA methyltransferase TrmD family. As to quaternary structure, homodimer.

The protein localises to the cytoplasm. It catalyses the reaction guanosine(37) in tRNA + S-adenosyl-L-methionine = N(1)-methylguanosine(37) in tRNA + S-adenosyl-L-homocysteine + H(+). Its function is as follows. Specifically methylates guanosine-37 in various tRNAs. This is tRNA (guanine-N(1)-)-methyltransferase from Novosphingobium aromaticivorans (strain ATCC 700278 / DSM 12444 / CCUG 56034 / CIP 105152 / NBRC 16084 / F199).